We begin with the raw amino-acid sequence, 394 residues long: Tubby-like F-box protein 2 (394 aa).

The segment at 21–44 (SKRSWSKSSHIAPDQTTPPLDNIP) is disordered. Over residues 26–44 (SKSSHIAPDQTTPPLDNIP) the composition is skewed to polar residues. The region spanning 46-101 (SPWASLPPELLHDIIWRVEESETAWPARAAVVSCASVCKSWRGITMEIVRIPEQCG) is the F-box domain. Disordered regions lie at residues 200–225 (ASST…PTNS) and 268–297 (IEEE…PSLR).

It belongs to the TUB family. Ubiquitous.

This Arabidopsis thaliana (Mouse-ear cress) protein is Tubby-like F-box protein 2.